A 451-amino-acid chain; its full sequence is Phosphoglucosamine mutase (451 aa).

The active-site Phosphoserine intermediate is the Ser102. Residues Ser102, Asp244, Asp246, and Asp248 each coordinate Mg(2+). Residue Ser102 is modified to Phosphoserine.

Belongs to the phosphohexose mutase family. The cofactor is Mg(2+). Activated by phosphorylation.

It carries out the reaction alpha-D-glucosamine 1-phosphate = D-glucosamine 6-phosphate. Its function is as follows. Catalyzes the conversion of glucosamine-6-phosphate to glucosamine-1-phosphate. The sequence is that of Phosphoglucosamine mutase from Lawsonia intracellularis (strain PHE/MN1-00).